Here is a 325-residue protein sequence, read N- to C-terminus: Heat-inducible transcription repressor HrcA (325 aa).

Belongs to the HrcA family.

Negative regulator of class I heat shock genes (grpE-dnaK-dnaJ and groELS operons). Prevents heat-shock induction of these operons. The polypeptide is Heat-inducible transcription repressor HrcA (Staphylococcus epidermidis (strain ATCC 35984 / DSM 28319 / BCRC 17069 / CCUG 31568 / BM 3577 / RP62A)).